A 185-amino-acid chain; its full sequence is Elongation factor P (185 aa).

It belongs to the elongation factor P family.

It is found in the cytoplasm. It participates in protein biosynthesis; polypeptide chain elongation. Its function is as follows. Involved in peptide bond synthesis. Stimulates efficient translation and peptide-bond synthesis on native or reconstituted 70S ribosomes in vitro. Probably functions indirectly by altering the affinity of the ribosome for aminoacyl-tRNA, thus increasing their reactivity as acceptors for peptidyl transferase. In Clostridium tetani (strain Massachusetts / E88), this protein is Elongation factor P.